The primary structure comprises 322 residues: Mycothiol acetyltransferase (322 aa).

N-acetyltransferase domains follow at residues 5 to 150 (SWLR…DPDD) and 160 to 322 (VTIR…PARG). E36 contributes to the 1D-myo-inositol 2-(L-cysteinylamino)-2-deoxy-alpha-D-glucopyranoside binding site. Acetyl-CoA-binding positions include 79–81 (LVV) and 87–92 (RRGVGT). E187, K226, and E252 together coordinate 1D-myo-inositol 2-(L-cysteinylamino)-2-deoxy-alpha-D-glucopyranoside. An acetyl-CoA-binding site is contributed by 256–258 (VGV). Y290 provides a ligand contact to 1D-myo-inositol 2-(L-cysteinylamino)-2-deoxy-alpha-D-glucopyranoside. 295–300 (NARAVR) is a binding site for acetyl-CoA.

It belongs to the acetyltransferase family. MshD subfamily. As to quaternary structure, monomer.

The catalysed reaction is 1D-myo-inositol 2-(L-cysteinylamino)-2-deoxy-alpha-D-glucopyranoside + acetyl-CoA = mycothiol + CoA + H(+). Its function is as follows. Catalyzes the transfer of acetyl from acetyl-CoA to desacetylmycothiol (Cys-GlcN-Ins) to form mycothiol. This Parafrankia sp. (strain EAN1pec) protein is Mycothiol acetyltransferase.